Consider the following 1198-residue polypeptide: Structural polyprotein (1198 aa).

The interaction with host EXOC1 stretch occupies residues 2–15 (TKKPGGPGKNRAIN). Residues 2–109 (TKKPGGPGKN…RKQNKRGGNE (108 aa)) are Cytoplasmic-facing. Positions 37 to 72 (LLDGRGPVRFVLALITFFKFTALAPTKALLGRWKAV) are hydrophobic; homodimerization of capsid protein C. Residues 106–127 (GGNEGSIMWLASLAVVIAYAGA) constitute a propeptide, ER anchor for the capsid protein C, removed in mature form by serine protease NS3. The helical transmembrane segment at 110 to 130 (GSIMWLASLAVVIAYAGAMKL) threads the bilayer. The Extracellular portion of the chain corresponds to 131-253 (SNFQGKLLMT…ATRYLMKTEN (123 aa)). N-linked (GlcNAc...) asparagine; by host glycosylation occurs at Asn-142. The chain crosses the membrane as a helical span at residues 254-274 (WIIRNPGYAFLAATLGWMLGS). The Cytoplasmic segment spans residues 275–279 (NNGQR). The chain crosses the membrane as a helical span at residues 280-294 (VVFTILLLLVAPAYS). The Extracellular segment spans residues 295-746 (FNCLGMGNRD…QVFGGAFRTL (452 aa)). 6 disulfides stabilise this stretch: Cys-297–Cys-324, Cys-354–Cys-410, Cys-354–Cys-415, Cys-368–Cys-399, Cys-386–Cys-410, and Cys-386–Cys-415. Positions 392–405 (DRGWGNGCGLFGKG) are fusion peptide. Asn-448 carries an N-linked (GlcNAc...) asparagine; by host glycan. 2 cysteine pairs are disulfide-bonded: Cys-484–Cys-581 and Cys-598–Cys-629. Residues 747–767 (FGGMSWITQGLMGALLLWMGV) form a helical membrane-spanning segment. Residues 768 to 773 (NARDRS) are Cytoplasmic-facing. A helical membrane pass occupies residues 774-794 (IALAFLATGGVLVFLATNVHA). The Extracellular portion of the chain corresponds to 795–1198 (DTGCAIDITR…CADAWGHHLH (404 aa)). 6 cysteine pairs are disulfide-bonded: Cys-798/Cys-809, Cys-849/Cys-937, Cys-973/Cys-1017, Cys-1074/Cys-1123, Cys-1085/Cys-1106, and Cys-1107/Cys-1110. 2 N-linked (GlcNAc...) asparagine; by host glycosylation sites follow: Asn-924 and Asn-1001. The tract at residues 1152–1177 (VDPFSAGPSGDVSGHPGGPSQEVDGQ) is disordered.

As to quaternary structure, homodimer. Interacts (via N-terminus) with host EXOC1 (via C-terminus); this interaction results in EXOC1 degradation through the proteasome degradation pathway. Interacts with host CAPRIN1; this interaction is involved in the suppression of the integrated stress response. Forms heterodimers with envelope protein E in the endoplasmic reticulum and Golgi. In terms of assembly, homodimer; in the endoplasmic reticulum and Golgi. Interacts with protein prM. Interacts with non-structural protein 1. Genome polyprotein: Specific enzymatic cleavages in vivo yield mature proteins. Cleavages in the lumen of endoplasmic reticulum are performed by host signal peptidase, whereas cleavages in the cytoplasmic side are performed by serine protease NS3. Signal cleavage at the 2K-4B site requires a prior NS3 protease-mediated cleavage at the 4A-2K site. In terms of processing, cleaved in post-Golgi vesicles by a host furin, releasing the mature small envelope protein M, and peptide pr. This cleavage is incomplete as up to 30% of viral particles still carry uncleaved prM. Post-translationally, N-glycosylated.

Its subcellular location is the secreted. It localises to the virion membrane. The protein resides in the host endoplasmic reticulum membrane. Plays a role in virus budding by binding to the cell membrane and gathering the viral RNA into a nucleocapsid that forms the core of a mature virus particle. During virus entry, may induce genome penetration into the host cytoplasm after hemifusion induced by the surface proteins. Can migrate to the cell nucleus where it modulates host functions. Overcomes the anti-viral effects of host EXOC1 by sequestering and degrading the latter through the proteasome degradation pathway. Inhibits the integrated stress response (ISR) in the infected cell by binding to host CAPRIN1. In terms of biological role, inhibits RNA silencing by interfering with host Dicer. Its function is as follows. Prevents premature fusion activity of envelope proteins in trans-Golgi by binding to envelope protein E at pH6.0. After virion release in extracellular space, gets dissociated from E dimers. Functionally, acts as a chaperone for envelope protein E during intracellular virion assembly by masking and inactivating envelope protein E fusion peptide. prM is the only viral peptide matured by host furin in the trans-Golgi network probably to avoid catastrophic activation of the viral fusion activity in acidic Golgi compartment prior to virion release. prM-E cleavage is inefficient, and many virions are only partially matured. These uncleaved prM would play a role in immune evasion. May play a role in virus budding. Exerts cytotoxic effects by activating a mitochondrial apoptotic pathway through M ectodomain. May display a viroporin activity. In terms of biological role, binds to host cell surface receptor and mediates fusion between viral and cellular membranes. Envelope protein is synthesized in the endoplasmic reticulum in the form of heterodimer with protein prM. They play a role in virion budding in the ER, and the newly formed immature particle is covered with 60 spikes composed of heterodimer between precursor prM and envelope protein E. The virion is transported to the Golgi apparatus where the low pH causes dissociation of PrM-E heterodimers and formation of E homodimers. prM-E cleavage is inefficient, and many virions are only partially matured. These uncleaved prM would play a role in immune evasion. Its function is as follows. May play a role in neuroinvasiveness. The sequence is that of Structural polyprotein from Japanese encephalitis virus (strain Jaoars982) (JEV).